A 239-amino-acid chain; its full sequence is uncharacterized protein (239 aa).

The tract at residues 193–214 is disordered; sequence RKRKLNLSDGENKAKSPYSSIS.

The protein resides in the nucleus. This is an uncharacterized protein from Schizosaccharomyces pombe (strain 972 / ATCC 24843) (Fission yeast).